A 722-amino-acid chain; its full sequence is Mating-type switching protein swi2 (722 aa).

Disordered stretches follow at residues methionine 1–serine 35 and serine 301–serine 342. A compositionally biased stretch (polar residues) spans serine 9–asparagine 22. Over residues glutamate 302 to proline 316 the composition is skewed to acidic residues. The segment covering threonine 319 to proline 332 has biased composition (polar residues).

Interacts with swi5 and rhp51.

Its function is as follows. Required for normal mating-type switching. The polypeptide is Mating-type switching protein swi2 (swi2) (Schizosaccharomyces pombe (strain 972 / ATCC 24843) (Fission yeast)).